The sequence spans 306 residues: Homoserine O-acetyltransferase (306 aa).

C142 serves as the catalytic Acyl-thioester intermediate. Substrate contacts are provided by K163 and S194. H237 functions as the Proton acceptor in the catalytic mechanism. Residue E239 is part of the active site. Position 251 (R251) interacts with substrate.

Belongs to the MetA family.

The protein localises to the cytoplasm. The enzyme catalyses L-homoserine + acetyl-CoA = O-acetyl-L-homoserine + CoA. The protein operates within amino-acid biosynthesis; L-methionine biosynthesis via de novo pathway; O-acetyl-L-homoserine from L-homoserine: step 1/1. Its function is as follows. Transfers an acetyl group from acetyl-CoA to L-homoserine, forming acetyl-L-homoserine. This Clostridium tetani (strain Massachusetts / E88) protein is Homoserine O-acetyltransferase.